Here is a 143-residue protein sequence, read N- to C-terminus: Small ribosomal subunit protein uS12 (143 aa).

Basic residues predominate over residues 1-20 (MGKPRGLRTARKLKNHRREQ). The disordered stretch occupies residues 1–28 (MGKPRGLRTARKLKNHRREQRWHDKDYK). A Hydroxyproline modification is found at Pro62.

The protein belongs to the universal ribosomal protein uS12 family. As to quaternary structure, component of the 40S small ribosomal subunit.

The protein localises to the cytoplasm. It localises to the cytosol. Its subcellular location is the rough endoplasmic reticulum. The polypeptide is Small ribosomal subunit protein uS12 (RPS23) (Lumbricus rubellus (Humus earthworm)).